The chain runs to 422 residues: Putative acid phosphatase 5 (422 aa).

The N-terminal stretch at 1-13 is a signal peptide; that stretch reads MLLLLVLLIGASG. The Nucleophile role is filled by H40. N104, N210, and N218 each carry an N-linked (GlcNAc...) asparagine glycan. Intrachain disulfides connect C152–C363, C205–C302, and C338–C342. The Proton donor role is filled by D279. N-linked (GlcNAc...) asparagine glycosylation is found at N312 and N323.

This sequence belongs to the histidine acid phosphatase family.

The catalysed reaction is a phosphate monoester + H2O = an alcohol + phosphate. In Caenorhabditis elegans, this protein is Putative acid phosphatase 5 (pho-5).